A 421-amino-acid chain; its full sequence is Adenylosuccinate synthetase (421 aa).

GTP-binding positions include 11–17 (GDEGKGK) and 39–41 (GHT). The Proton acceptor role is filled by D12. Residues D12 and G39 each contribute to the Mg(2+) site. IMP contacts are provided by residues 12 to 15 (DEGK), 37 to 40 (NAGH), T129, R143, N219, T234, and R298. The Proton donor role is filled by H40. Position 294–300 (294–300 (VTTGRRR)) interacts with substrate. Residues R300, 326–328 (KLD), and 409–411 (GTG) each bind GTP.

Belongs to the adenylosuccinate synthetase family. In terms of assembly, homodimer. Mg(2+) serves as cofactor.

The protein resides in the cytoplasm. The catalysed reaction is IMP + L-aspartate + GTP = N(6)-(1,2-dicarboxyethyl)-AMP + GDP + phosphate + 2 H(+). The protein operates within purine metabolism; AMP biosynthesis via de novo pathway; AMP from IMP: step 1/2. Its function is as follows. Plays an important role in the de novo pathway and in the salvage pathway of purine nucleotide biosynthesis. Catalyzes the first committed step in the biosynthesis of AMP from IMP. The sequence is that of Adenylosuccinate synthetase from Paracoccidioides lutzii (strain ATCC MYA-826 / Pb01) (Paracoccidioides brasiliensis).